The chain runs to 544 residues: NXPE family member 4 (544 aa).

The signal sequence occupies residues 1 to 27 (MKISMINYKSLLALLFILASWIIFTVF). N-linked (GlcNAc...) asparagine glycosylation is found at Asn-29, Asn-38, Asn-47, Asn-48, Asn-92, Asn-160, and Asn-210.

Belongs to the NXPE family.

The protein localises to the secreted. In Homo sapiens (Human), this protein is NXPE family member 4 (NXPE4).